Reading from the N-terminus, the 183-residue chain is Nodulation protein L (183 aa).

This sequence belongs to the transferase hexapeptide repeat family.

Its function is as follows. Acetyltransferase implicated in the O-acetylation of Nod factors. The sequence is that of Nodulation protein L (nodL) from Rhizobium meliloti (strain 1021) (Ensifer meliloti).